Reading from the N-terminus, the 85-residue chain is UPF0335 protein Atu3758 (85 aa).

Belongs to the UPF0335 family.

This Agrobacterium fabrum (strain C58 / ATCC 33970) (Agrobacterium tumefaciens (strain C58)) protein is UPF0335 protein Atu3758.